The following is an 885-amino-acid chain: Alanine--tRNA ligase (885 aa).

4 residues coordinate Zn(2+): H574, H578, C676, and H680.

The protein belongs to the class-II aminoacyl-tRNA synthetase family. Zn(2+) serves as cofactor.

It localises to the cytoplasm. It carries out the reaction tRNA(Ala) + L-alanine + ATP = L-alanyl-tRNA(Ala) + AMP + diphosphate. Functionally, catalyzes the attachment of alanine to tRNA(Ala) in a two-step reaction: alanine is first activated by ATP to form Ala-AMP and then transferred to the acceptor end of tRNA(Ala). Also edits incorrectly charged Ser-tRNA(Ala) and Gly-tRNA(Ala) via its editing domain. This Syntrophobacter fumaroxidans (strain DSM 10017 / MPOB) protein is Alanine--tRNA ligase.